The following is a 511-amino-acid chain: Bifunctional purine biosynthesis protein PurH (511 aa).

The 145-residue stretch at 1 to 145 (MKKRALVSVS…KNHKFVSVIV (145 aa)) folds into the MGS-like domain.

It belongs to the PurH family.

It catalyses the reaction (6R)-10-formyltetrahydrofolate + 5-amino-1-(5-phospho-beta-D-ribosyl)imidazole-4-carboxamide = 5-formamido-1-(5-phospho-D-ribosyl)imidazole-4-carboxamide + (6S)-5,6,7,8-tetrahydrofolate. It carries out the reaction IMP + H2O = 5-formamido-1-(5-phospho-D-ribosyl)imidazole-4-carboxamide. It participates in purine metabolism; IMP biosynthesis via de novo pathway; 5-formamido-1-(5-phospho-D-ribosyl)imidazole-4-carboxamide from 5-amino-1-(5-phospho-D-ribosyl)imidazole-4-carboxamide (10-formyl THF route): step 1/1. The protein operates within purine metabolism; IMP biosynthesis via de novo pathway; IMP from 5-formamido-1-(5-phospho-D-ribosyl)imidazole-4-carboxamide: step 1/1. This Bacillus thuringiensis (strain Al Hakam) protein is Bifunctional purine biosynthesis protein PurH.